The chain runs to 495 residues: Ribosome biogenesis protein YTM1 (495 aa).

Residues 15 to 97 are ubiquitin-like (UBL) domain; sequence VKVIFTTTEP…ETTLTLQYVR (83 aa). WD repeat units follow at residues 129-168, 175-213, 223-262, 264-295, 296-337, 386-426, and 458-495; these read WSSA…IATS, GHTA…HFTG, GHTG…APEP, ASLL…LWSI, HTAP…STLT, GHAN…PATK, and GDGC…TEQK.

This sequence belongs to the WD repeat WDR12/YTM1 family. In terms of assembly, component of the NOP7 complex, composed of ERB1, NOP7 and YTM1. The complex is held together by ERB1, which interacts with NOP7 via its N-terminal domain and with YTM1 via a high-affinity interaction between the seven-bladed beta-propeller domains of the 2 proteins. The NOP7 complex associates with the 66S pre-ribosome. Interacts (via UBL domain) with MDN1 (via VWFA/MIDAS domain).

The protein resides in the nucleus. The protein localises to the nucleolus. Its subcellular location is the nucleoplasm. Component of the NOP7 complex, which is required for maturation of the 25S and 5.8S ribosomal RNAs and formation of the 60S ribosome. This Chaetomium thermophilum (strain DSM 1495 / CBS 144.50 / IMI 039719) (Thermochaetoides thermophila) protein is Ribosome biogenesis protein YTM1.